The sequence spans 337 residues: Structural protein VP9 (337 aa).

Its subcellular location is the virion. It is found in the host cytoplasm. The polypeptide is Structural protein VP9 (Colorado tick fever virus (strain USA/Florio N-7180) (CTFV)).